The primary structure comprises 160 residues: Major pollen allergen Bet v 1-A (160 aa).

Lys55, Tyr82, Tyr84, and Asn101 together coordinate brassinolide.

Belongs to the BetVI family.

Its subcellular location is the cytoplasm. May be a general steroid carrier protein. The polypeptide is Major pollen allergen Bet v 1-A (BETVIA) (Betula pendula (European white birch)).